Reading from the N-terminus, the 499-residue chain is Alpha-amylase A type-3 (499 aa).

An N-terminal signal peptide occupies residues 1-21 (MMVAWWSLFLYGLQVAAPALA). C51 and C59 are disulfide-bonded. W104 contributes to the substrate binding site. Residue N142 coordinates Ca(2+). H143 provides a ligand contact to substrate. An intrachain disulfide couples C171 to C185. E183 and D196 together coordinate Ca(2+). Residue N218 is glycosylated (N-linked (GlcNAc...) asparagine). R225 serves as a coordination point for substrate. Ca(2+)-binding residues include D227, H231, and E251. The active-site Nucleophile is the D227. Substrate is bound at residue 230-231 (KH). Residue E251 is the Proton donor of the active site. A substrate-binding site is contributed by G255. A disulfide bond links C261 and C304. A substrate-binding site is contributed by R365. Cysteines 461 and 496 form a disulfide.

Belongs to the glycosyl hydrolase 13 family. In terms of assembly, monomer. Ca(2+) is required as a cofactor.

The protein resides in the secreted. The enzyme catalyses Endohydrolysis of (1-&gt;4)-alpha-D-glucosidic linkages in polysaccharides containing three or more (1-&gt;4)-alpha-linked D-glucose units.. This is Alpha-amylase A type-3 (amy3) from Aspergillus oryzae (strain ATCC 42149 / RIB 40) (Yellow koji mold).